Reading from the N-terminus, the 472-residue chain is PEP-dependent dihydroxyacetone kinase, phosphoryl donor subunit DhaM (472 aa).

Positions 1–135 (MVNLVIVSHS…NALEAKRVQL (135 aa)) constitute a PTS EIIA type-4 domain. The active-site Tele-phosphohistidine intermediate is the H9. The 88-residue stretch at 156–243 (ARSVSVVIQN…ALAAENFGEP (88 aa)) folds into the HPr domain. The active-site Pros-phosphohistidine intermediate is H170. Positions 266-472 (PQPQDRISRE…DIPGKRVIRG (207 aa)) are PTS EI-like, N-terminal part. H432 (tele-phosphohistidine intermediate) is an active-site residue.

The protein belongs to the PEP-utilizing enzyme family. In terms of assembly, homodimer. The dihydroxyacetone kinase complex is composed of a homodimer of DhaM, a homodimer of DhaK and the subunit DhaL.

The enzyme catalyses dihydroxyacetone + phosphoenolpyruvate = dihydroxyacetone phosphate + pyruvate. Component of the dihydroxyacetone kinase complex, which is responsible for the phosphoenolpyruvate (PEP)-dependent phosphorylation of dihydroxyacetone. DhaM serves as the phosphoryl donor. Is phosphorylated by phosphoenolpyruvate in an EI- and HPr-dependent reaction, and a phosphorelay system on histidine residues finally leads to phosphoryl transfer to DhaL and dihydroxyacetone. This Klebsiella michiganensis (strain ATCC 8724 / DSM 4798 / JCM 20051 / NBRC 3318 / NRRL B-199 / KCTC 1686 / BUCSAV 143 / CCM 1901) protein is PEP-dependent dihydroxyacetone kinase, phosphoryl donor subunit DhaM.